The chain runs to 391 residues: MASGGVVKKEIGGNHDVVRFGVNDSVKGDLAPPHPLQASVHKEAKFWADKKRFGAEAIYGSAFNIRKDLDAQILSKFQRPPGALPSSMLGYEALTGSLDDFGFEDYLNYAAASEDGWVLGRGALELLLGGTAYTQATSAPQISLSMQQVQRRELQLVAVSAMLIDCKYEEIWAPEVNDFIFISDSAYTREQILAMEKGILNKLQWNLTIPTPYVFIMMLSASADNKSDKENAEALKFKRLSQSRQQLIDWSVKIKVSKEHGGFMRFIQVSCLGASASSSRMLRAKAAGEESVLKEFPEPLRLLISHRQSMGTCILNFHSRIQPVYVVDVAAAIVNSLKDDGTSMGKSYGLGGPEIYTVHDLAELMYETICEWPRYIDVPLPIARAIASPES.

This sequence belongs to the cyclin family. Cyclin AB subfamily.

This is Cyclin-B1-2 (CYCB1-2) from Oryza sativa subsp. japonica (Rice).